Here is a 904-residue protein sequence, read N- to C-terminus: DNA mismatch repair protein MutS (904 aa).

ATP is bound at residue 655 to 662; the sequence is GPNMGGKS.

Belongs to the DNA mismatch repair MutS family.

Its function is as follows. This protein is involved in the repair of mismatches in DNA. It is possible that it carries out the mismatch recognition step. This protein has a weak ATPase activity. The sequence is that of DNA mismatch repair protein MutS from Rhizorhabdus wittichii (strain DSM 6014 / CCUG 31198 / JCM 15750 / NBRC 105917 / EY 4224 / RW1) (Sphingomonas wittichii).